The sequence spans 242 residues: Enolase-phosphatase E1 (242 aa).

This sequence belongs to the HAD-like hydrolase superfamily. MasA/MtnC family. As to quaternary structure, monomer. It depends on Mg(2+) as a cofactor.

It catalyses the reaction 5-methylsulfanyl-2,3-dioxopentyl phosphate + H2O = 1,2-dihydroxy-5-(methylsulfanyl)pent-1-en-3-one + phosphate. Its pathway is amino-acid biosynthesis; L-methionine biosynthesis via salvage pathway; L-methionine from S-methyl-5-thio-alpha-D-ribose 1-phosphate: step 3/6. It participates in amino-acid biosynthesis; L-methionine biosynthesis via salvage pathway; L-methionine from S-methyl-5-thio-alpha-D-ribose 1-phosphate: step 4/6. Functionally, bifunctional enzyme that catalyzes the enolization of 2,3-diketo-5-methylthiopentyl-1-phosphate (DK-MTP-1-P) into the intermediate 2-hydroxy-3-keto-5-methylthiopentenyl-1-phosphate (HK-MTPenyl-1-P), which is then dephosphorylated to form the acireductone 1,2-dihydroxy-3-keto-5-methylthiopentene (DHK-MTPene). This chain is Enolase-phosphatase E1, found in Synechococcus sp. (strain WH7803).